The following is a 121-amino-acid chain: Large ribosomal subunit protein uL14 (121 aa).

Belongs to the universal ribosomal protein uL14 family. Part of the 50S ribosomal subunit. Forms a cluster with proteins L3 and L19. In the 70S ribosome, L14 and L19 interact and together make contacts with the 16S rRNA in bridges B5 and B8.

Functionally, binds to 23S rRNA. Forms part of two intersubunit bridges in the 70S ribosome. The sequence is that of Large ribosomal subunit protein uL14 from Synechococcus elongatus (strain ATCC 33912 / PCC 7942 / FACHB-805) (Anacystis nidulans R2).